A 289-amino-acid chain; its full sequence is Oxaloacetate decarboxylase (289 aa).

A substrate-binding site is contributed by Ser47. Asp85 lines the Mg(2+) pocket. The substrate site is built by Arg156 and His232.

The protein belongs to the isocitrate lyase/PEP mutase superfamily. Oxaloacetate decarboxylase family. As to quaternary structure, homotetramer; dimer of dimers. Mg(2+) is required as a cofactor.

It catalyses the reaction oxaloacetate + H(+) = pyruvate + CO2. Functionally, catalyzes the decarboxylation of oxaloacetate into pyruvate. Seems to play a role in maintaining cellular concentrations of bicarbonate and pyruvate. This Rhodopseudomonas palustris (strain HaA2) protein is Oxaloacetate decarboxylase.